Reading from the N-terminus, the 409-residue chain is Runt-related transcription factor 3 (409 aa).

Disordered stretches follow at residues 1 to 51 (MRIP…RTRP), 177 to 248 (GPRE…QFDR), and 346 to 409 (AGGG…WRPY). The segment covering 7–17 (PSTSRRFTPPS) has biased composition (polar residues). Residues 55 to 183 (SMVDVLADHA…TVDGPREPRR (129 aa)) form the Runt domain. The segment covering 187 to 204 (KIEDQTKAFPDRFGDLRM) has biased composition (basic and acidic residues). Residue lysine 193 forms a Glycyl lysine isopeptide (Lys-Gly) (interchain with G-Cter in SUMO2) linkage. Positions 207–238 (TPSTPSPRGSLSTTSHFSSQAQTPIQGSSDLN) are enriched in polar residues. Serine 241 carries the phosphoserine modification. Composition is skewed to polar residues over residues 355–376 (RMLTSCPSGASVSAGNLMNPSL) and 387–396 (SHSNSPTALS). A compositionally biased stretch (basic and acidic residues) spans 400–409 (RMDEAVWRPY).

In terms of assembly, heterodimer with CBFB. RUNX3 binds DNA as a monomer and through the Runt domain. DNA-binding is increased by heterodimerization. Interacts with TLE1 and SUV39H1. The tyrosine phosphorylated form (via runt domain) interacts with SRC (via protein kinase domain). Interacts with FYN and LCK. Interacts with FOXP3. Interacts with ZFHX3. Interacts with TBX21. In terms of processing, phosphorylated on tyrosine residues by SRC. Phosphorylated by LCK and FYN.

The protein resides in the nucleus. The protein localises to the cytoplasm. Functionally, forms the heterodimeric complex core-binding factor (CBF) with CBFB. RUNX members modulate the transcription of their target genes through recognizing the core consensus binding sequence 5'-TGTGGT-3', or very rarely, 5'-TGCGGT-3', within their regulatory regions via their runt domain, while CBFB is a non-DNA-binding regulatory subunit that allosterically enhances the sequence-specific DNA-binding capacity of RUNX. The heterodimers bind to the core site of a number of enhancers and promoters, including murine leukemia virus, polyomavirus enhancer, T-cell receptor enhancers, LCK, IL3 and GM-CSF promoters. May be involved in the control of cellular proliferation and/or differentiation. In association with ZFHX3, up-regulates CDKN1A promoter activity following TGF-beta stimulation. CBF complexes repress ZBTB7B transcription factor during cytotoxic (CD8+) T cell development. They bind to RUNX-binding sequence within the ZBTB7B locus acting as transcriptional silencer and allowing for cytotoxic T cell differentiation. CBF complexes binding to the transcriptional silencer is essential for recruitment of nuclear protein complexes that catalyze epigenetic modifications to establish epigenetic ZBTB7B silencing. Necessary for the development and survival of sensory neurons expressing parvalbumin. In Mus musculus (Mouse), this protein is Runt-related transcription factor 3 (Runx3).